A 384-amino-acid polypeptide reads, in one-letter code: Succinyl-diaminopimelate desuccinylase (384 aa).

Position 72 (His-72) interacts with Zn(2+). Asp-74 is an active-site residue. A Zn(2+)-binding site is contributed by Asp-105. Glu-139 (proton acceptor) is an active-site residue. The Zn(2+) site is built by Glu-140, Glu-168, and His-355.

This sequence belongs to the peptidase M20A family. DapE subfamily. In terms of assembly, homodimer. Requires Zn(2+) as cofactor. Co(2+) serves as cofactor.

It carries out the reaction N-succinyl-(2S,6S)-2,6-diaminopimelate + H2O = (2S,6S)-2,6-diaminopimelate + succinate. Its pathway is amino-acid biosynthesis; L-lysine biosynthesis via DAP pathway; LL-2,6-diaminopimelate from (S)-tetrahydrodipicolinate (succinylase route): step 3/3. Catalyzes the hydrolysis of N-succinyl-L,L-diaminopimelic acid (SDAP), forming succinate and LL-2,6-diaminopimelate (DAP), an intermediate involved in the bacterial biosynthesis of lysine and meso-diaminopimelic acid, an essential component of bacterial cell walls. The polypeptide is Succinyl-diaminopimelate desuccinylase (Blochmanniella pennsylvanica (strain BPEN)).